Reading from the N-terminus, the 1041-residue chain is Cullin-associated NEDD8-dissociated protein 1, C-terminal part (1041 aa).

Disordered regions lie at residues 1-24 (MSSDAMSDYSHDDEHDPQTDELRE) and 64-103 (DMGEDEEMSGTQDDGSEDDVTEEPDLEDDDFEDFEEEGGY). A compositionally biased stretch (basic and acidic residues) spans 9–24 (YSHDDEHDPQTDELRE). Residues 65-103 (MGEDEEMSGTQDDGSEDDVTEEPDLEDDDFEDFEEEGGY) are compositionally biased toward acidic residues. Residues 138–176 (SLYQQIAPAIVARFNKEREESVKLELVSTMDALVRKTAE) form an HEAT 1 repeat. The interval 189–237 (SVGSGSKISRKRRRQDSDASMIDFEPSMGTSSAAGTPLAAPSSPQSGPQ) is disordered. The segment covering 225 to 237 (PLAAPSSPQSGPQ) has biased composition (low complexity). HEAT repeat units follow at residues 242-279 (NALPVIVRSLVTMWKQASIHLKQAIIILLKSLALVRYG), 339-376 (PFLIALIPGVIVAVNDKNYKVSSEALAAVEQIVKALTP), 434-472 (LSFEKRSKGLVTLVDRLKNETTRLSAVRAIDDVAVLCSR), 479-516 (NWVREVTAELGAQLRKSDRVLRSASLETLRSLSMNPNT), 525-560 (MKNLEECLIPLISVEDVHLLAPSLIIIAKLVPGNAQ), 598-637 (GSGLTLMQNLLQDVGVNGDTSVVGRSIGTLLVHGGSNVGV), 670-708 (GASCSLTPNVFIPHFNSKSEKVRLASATALGNAAAGNVK), 710-744 (YLPTILGGLEKSDPQSYLLLHSVKELLQHPEMVRR), 780-817 (LDPPAYIPQFQEYLANGDAGIRSIVVSAFRFTLSDSRD), and 822-867 (VLRP…HLGE).

It belongs to the CAND family. As to quaternary structure, interacts with candA-N. Interacts with unneddylated cullins culA and culD.

The protein resides in the nucleus. Assembly factor of SCF (SKP1-CUL1-F-box protein) E3 ubiquitin ligase complexes that promotes the exchange of the substrate-recognition F-box subunit in SCF complexes, thereby playing a key role in the cellular repertoire of SCF complexes. Acts as a F-box protein exchange factor when interacting with candA-N. The sequence is that of Cullin-associated NEDD8-dissociated protein 1, C-terminal part (candA-C) from Emericella nidulans (strain FGSC A4 / ATCC 38163 / CBS 112.46 / NRRL 194 / M139) (Aspergillus nidulans).